We begin with the raw amino-acid sequence, 454 residues long: tRNA modification GTPase MnmE (454 aa).

Positions 23, 80, and 120 each coordinate (6S)-5-formyl-5,6,7,8-tetrahydrofolate. A TrmE-type G domain is found at 216 to 377 (GMKVVIAGRP…LRNHLKQSMG (162 aa)). Asn-226 is a binding site for K(+). GTP is bound by residues 226–231 (NAGKSS), 245–251 (TDIAGTT), 270–273 (DTAG), 335–338 (NKAD), and 358–360 (SAR). Ser-230 is a Mg(2+) binding site. Residues Thr-245, Ile-247, and Thr-250 each coordinate K(+). Thr-251 provides a ligand contact to Mg(2+). Lys-454 lines the (6S)-5-formyl-5,6,7,8-tetrahydrofolate pocket.

It belongs to the TRAFAC class TrmE-Era-EngA-EngB-Septin-like GTPase superfamily. TrmE GTPase family. As to quaternary structure, homodimer. Heterotetramer of two MnmE and two MnmG subunits. K(+) is required as a cofactor.

It localises to the cytoplasm. Exhibits a very high intrinsic GTPase hydrolysis rate. Involved in the addition of a carboxymethylaminomethyl (cmnm) group at the wobble position (U34) of certain tRNAs, forming tRNA-cmnm(5)s(2)U34. The polypeptide is tRNA modification GTPase MnmE (Salmonella typhimurium (strain LT2 / SGSC1412 / ATCC 700720)).